The following is a 746-amino-acid chain: MLNPINKTIELGDGRTITIETGKLAKQADGAVTVRMNNTVLLATVCAAKDANPGVDFMPLQVEYKEKYSAFGRFPGGFTKREGKASDYEILTSRLVDRALRPLFPDNYHAEVYVNIILFSADGEDLPDALAGLAASAALAVSDIPFNGPISEVRVARTDGKYIVNPTSAELEKADIDIMVAATIDNIMMVEGEMNEVQESEMLEAIKVAHEAIKVQCKAQLELSEACGKLVKREYCHEVNDDELRKDVHDKCYAKAYAVATSGSGKHERSEAFEKIVEEYKAQFSEEELTDEKLEMIGRYYHDVEKEAMRRAILDEGKRLDGRKTTEIRPIWIETDCLPGPHGSAIFTRGETQSLSTVTLGTKSDEKMIDDVLNHGYERFLLHYNFPPFSTGEAKATRGVGRREIGHGNLAHRALKRMIPDNYPYVVRVISDILESNGSSSMATVCAGTLALRDAGVPMKKPVSGIAMGLISENKGTNYAILSDILGDEDHLGDMDFKVTGTKDGITATQMDIKVDGLSYEILENALAQAKEGRMHILGKILEAQPEAREDLKPHAPRIETMIIGKEFIGAVIGPGGKIIQGIQEKTGATVSIDEVDGVGKIEISGTNKATIDAAVKAIKAIVAVPEIGEVYEGKISSIMPYGAFVEFMPGKDGLLHISEIDWKRLETVEQAGLKEGDTVSVKLVDIDPKTGKFKLSRKVLLPKPEGYEERPPRPERGERGPRQDRGDRGPRQDRGDRGPRREYRD.

Residues D490 and D496 each coordinate Mg(2+). Positions 557 to 619 constitute a KH domain; the sequence is PRIETMIIGK…ATIDAAVKAI (63 aa). The region spanning 629 to 699 is the S1 motif domain; that stretch reads GEVYEGKISS…KTGKFKLSRK (71 aa). A disordered region spans residues 701–746; sequence LLPKPEGYEERPPRPERGERGPRQDRGDRGPRQDRGDRGPRREYRD. The span at 706–746 shows a compositional bias: basic and acidic residues; sequence EGYEERPPRPERGERGPRQDRGDRGPRQDRGDRGPRREYRD.

Belongs to the polyribonucleotide nucleotidyltransferase family. It depends on Mg(2+) as a cofactor.

The protein resides in the cytoplasm. It catalyses the reaction RNA(n+1) + phosphate = RNA(n) + a ribonucleoside 5'-diphosphate. Involved in mRNA degradation. Catalyzes the phosphorolysis of single-stranded polyribonucleotides processively in the 3'- to 5'-direction. This Parabacteroides distasonis (strain ATCC 8503 / DSM 20701 / CIP 104284 / JCM 5825 / NCTC 11152) protein is Polyribonucleotide nucleotidyltransferase.